The chain runs to 377 residues: MNKVLINDTTLRDGEQAAGVVFTLEEKVAIAKFLDTIGVPELEVGIPAMGEEEMRAICAISNLGLKANLLAWNRAVISDIKASVACGMERVHIAIPVSGIQIAAKFHGQWRVSLQRLKDCISFAVDQGLWVAVGGEDSSRADENFLLDVALYAQEWGASRFRFCDTVGVLDPFTTYGKVKLLVSALTIPVEVHTHNDFGMATANALAGIKAGASSVNTTVIGLGERAGNAALEEVVMAIKRIYGVDMGIDTPRLLELSQLVAAASGANVPPWKAIVGENTFAHESGIHAHGVLQNPDTYEPFAPEEVGWERRLVVGKHSGRHSVSNLLEQHGIFLNPEETQSVLDAVRQQSIKKKRSLTTEELLNLVKEQRYSHAAR.

Positions 4–255 (VLINDTTLRD…DMGIDTPRLL (252 aa)) constitute a Pyruvate carboxyltransferase domain.

The protein belongs to the alpha-IPM synthase/homocitrate synthase family.

It carries out the reaction acetyl-CoA + 2-oxoglutarate + H2O = (2R)-homocitrate + CoA + H(+). In terms of biological role, this protein is a Fe-Mo-cofactor biosynthetic component. The protein is Homocitrate synthase 1 (nifV1) of Nostoc sp. (strain PCC 7120 / SAG 25.82 / UTEX 2576).